Consider the following 257-residue polypeptide: Thiazole synthase (257 aa).

Residue lysine 98 is the Schiff-base intermediate with DXP of the active site. 1-deoxy-D-xylulose 5-phosphate is bound by residues glycine 159, 185–186, and 207–208; these read AG and NT.

The protein belongs to the ThiG family. As to quaternary structure, homotetramer. Forms heterodimers with either ThiH or ThiS.

The protein localises to the cytoplasm. The enzyme catalyses [ThiS sulfur-carrier protein]-C-terminal-Gly-aminoethanethioate + 2-iminoacetate + 1-deoxy-D-xylulose 5-phosphate = [ThiS sulfur-carrier protein]-C-terminal Gly-Gly + 2-[(2R,5Z)-2-carboxy-4-methylthiazol-5(2H)-ylidene]ethyl phosphate + 2 H2O + H(+). It participates in cofactor biosynthesis; thiamine diphosphate biosynthesis. Functionally, catalyzes the rearrangement of 1-deoxy-D-xylulose 5-phosphate (DXP) to produce the thiazole phosphate moiety of thiamine. Sulfur is provided by the thiocarboxylate moiety of the carrier protein ThiS. In vitro, sulfur can be provided by H(2)S. The sequence is that of Thiazole synthase from Anaeromyxobacter dehalogenans (strain 2CP-1 / ATCC BAA-258).